The sequence spans 160 residues: RNA-binding protein 3 (160 aa).

In terms of domain architecture, RRM spans 6 to 84; that stretch reads GKLFVGGLNF…RQIRVDHAGK (79 aa). Arg-47 carries the omega-N-methylarginine modification. The segment at 81–116 is disordered; that stretch reads HAGKSARGSRGGAFGSYERGRGYPRGGGDQGYGSGR. Residues 103 to 114 show a composition bias toward gly residues; sequence YPRGGGDQGYGS. At Arg-105 the chain carries Asymmetric dimethylarginine; alternate. Arg-105 is subject to Dimethylated arginine; alternate. Arg-105 bears the Omega-N-methylarginine; alternate mark. Omega-N-methylarginine occurs at positions 120 and 134. The tract at residues 135-160 is disordered; the sequence is SRDYGGRSQGGYDRYSGGNYRDNYDN. Residue Ser-150 is modified to Phosphoserine. Residue Tyr-158 is modified to Phosphotyrosine.

In terms of assembly, interacts with RPL4. Associates with the 60S ribosomal subunits.

It localises to the nucleus. Its subcellular location is the cytoplasm. The protein resides in the cell projection. The protein localises to the dendrite. Cold-inducible mRNA binding protein that enhances global protein synthesis at both physiological and mild hypothermic temperatures. Reduces the relative abundance of microRNAs, when overexpressed. Enhances phosphorylation of translation initiation factors and active polysome formation. The chain is RNA-binding protein 3 from Capra hircus (Goat).